The sequence spans 256 residues: uncharacterized protein (256 aa).

One can recognise an HTH cro/C1-type domain in the interval Ile10–Tyr64. The segment at residues Leu21–Arg40 is a DNA-binding region (H-T-H motif).

This is an uncharacterized protein from Mycobacterium bovis (strain ATCC BAA-935 / AF2122/97).